The primary structure comprises 694 residues: TBC1 domain family member 14 (694 aa).

Ser92 carries the post-translational modification Phosphoserine. Residues 272–289 (TAQKDSKKTQKEYEDKAG) are compositionally biased toward basic and acidic residues. The tract at residues 272 to 305 (TAQKDSKKTQKEYEDKAGRPSRPPSPKQNVRKNL) is disordered. Phosphoserine is present on Ser296. A Rab-GAP TBC domain is found at 402 to 612 (GIPPSVRGKV…RIWDVFCRDG (211 aa)).

As to quaternary structure, interacts with ULK1. May interact with RAB11A and RAB11B, but does not exhibit any GTPase-activating activity toward these proteins. Interacts with TRAPPC8.

It is found in the golgi apparatus. The protein resides in the cis-Golgi network. The protein localises to the trans-Golgi network. Plays a role in the regulation of starvation-induced autophagosome formation. Together with the TRAPPIII complex, regulates a constitutive trafficking step from peripheral recycling endosomes to the early Golgi, maintaining the cycling pool of ATG9 required for initiation of autophagy. The chain is TBC1 domain family member 14 (Tbc1d14) from Mus musculus (Mouse).